Consider the following 269-residue polypeptide: Diadenylate cyclase (269 aa).

The 158-residue stretch at 109–266 folds into the DAC domain; it reads RSGIYDLFAN…GGKMILEIDP (158 aa).

Belongs to the adenylate cyclase family. DacZ subfamily. Mn(2+) serves as cofactor.

The enzyme catalyses 2 ATP = 3',3'-c-di-AMP + 2 diphosphate. Its function is as follows. Diadenylate cyclase that catalyzes the condensation of 2 ATP molecules into cyclic di-AMP (c-di-AMP). c-di-AMP is a second messenger for intracellular signal transduction involved in the control of important regulatory processes such as osmoregulation. Is essential for H.volcanii. Overexpression of DacZ leads to cell death, suggesting the need for tight regulation of c-di-AMP levels. Cannot use GTP as substrate. The protein is Diadenylate cyclase of Haloferax volcanii (strain ATCC 29605 / DSM 3757 / JCM 8879 / NBRC 14742 / NCIMB 2012 / VKM B-1768 / DS2) (Halobacterium volcanii).